A 146-amino-acid chain; its full sequence is Large ribosomal subunit protein mL49 (146 aa).

A mitochondrion-targeting transit peptide spans 1-38 (MISSCVTRCFGRGKCLPGPATASIYQTIRCISTNSNKA).

The protein belongs to the mitochondrion-specific ribosomal protein mL49 family. Component of the mitochondrial large ribosomal subunit (mt-LSU). Mature yeast 74S mitochondrial ribosomes consist of a small (37S) and a large (54S) subunit. The 37S small subunit contains a 15S ribosomal RNA (15S mt-rRNA) and 34 different proteins. The 54S large subunit contains a 21S rRNA (21S mt-rRNA) and 46 different proteins.

The protein localises to the mitochondrion. Its function is as follows. Component of the mitochondrial ribosome (mitoribosome), a dedicated translation machinery responsible for the synthesis of mitochondrial genome-encoded proteins, including at least some of the essential transmembrane subunits of the mitochondrial respiratory chain. The mitoribosomes are attached to the mitochondrial inner membrane and translation products are cotranslationally integrated into the membrane. In Saccharomyces cerevisiae (strain ATCC 204508 / S288c) (Baker's yeast), this protein is Large ribosomal subunit protein mL49 (IMG2).